The chain runs to 145 residues: Basic phospholipase A2 cPm05 (145 aa).

The first 21 residues, 1 to 21 (MYPAHLLVLLAVCISLLGASA), serve as a signal peptide directing secretion. The propeptide occupies 22-27 (IPPLPL). 7 cysteine pairs are disulfide-bonded: C38-C98, C54-C144, C56-C72, C71-C125, C78-C118, C87-C111, and C105-C116. Y55, G57, and G59 together coordinate Ca(2+). The active site involves H75. Residue D76 coordinates Ca(2+). Residue D119 is part of the active site.

This sequence belongs to the phospholipase A2 family. Group I subfamily. D49 sub-subfamily. Ca(2+) is required as a cofactor. Expressed by the venom gland.

It localises to the secreted. The catalysed reaction is a 1,2-diacyl-sn-glycero-3-phosphocholine + H2O = a 1-acyl-sn-glycero-3-phosphocholine + a fatty acid + H(+). In terms of biological role, PLA2 catalyzes the calcium-dependent hydrolysis of the 2-acyl groups in 3-sn-phosphoglycerides. In Laticauda semifasciata (Black-banded sea krait), this protein is Basic phospholipase A2 cPm05.